Reading from the N-terminus, the 504-residue chain is Pentatricopeptide repeat-containing protein At1g05600 (504 aa).

12 PPR repeats span residues 45-79 (NGSV…SCEC), 80-114 (KDSV…NCVN), 115-145 (WSLS…YCYG), 151-185 (RITA…GCYP), 186-216 (DRDS…MFWR), 225-259 (DIVV…GLKA), 260-296 (PKRC…GAIP), 297-331 (CLDS…GFEP), 332-367 (TPFI…HCLP), 368-398 (TVGV…MSKQ), 404-438 (NEET…SHFP), and 439-473 (GVET…DMVP).

It belongs to the PPR family. P subfamily.

The polypeptide is Pentatricopeptide repeat-containing protein At1g05600 (Arabidopsis thaliana (Mouse-ear cress)).